A 268-amino-acid polypeptide reads, in one-letter code: 4-hydroxy-tetrahydrodipicolinate reductase (268 aa).

Residues 10–15 (GASGRM), Asp36, 99–101 (GTT), and 123–126 (APNM) each bind NAD(+). His156 serves as the catalytic Proton donor/acceptor. Residue His157 participates in (S)-2,3,4,5-tetrahydrodipicolinate binding. Residue Lys160 is the Proton donor of the active site. 166–167 (GT) lines the (S)-2,3,4,5-tetrahydrodipicolinate pocket.

It belongs to the DapB family.

The protein resides in the cytoplasm. It catalyses the reaction (S)-2,3,4,5-tetrahydrodipicolinate + NAD(+) + H2O = (2S,4S)-4-hydroxy-2,3,4,5-tetrahydrodipicolinate + NADH + H(+). The catalysed reaction is (S)-2,3,4,5-tetrahydrodipicolinate + NADP(+) + H2O = (2S,4S)-4-hydroxy-2,3,4,5-tetrahydrodipicolinate + NADPH + H(+). It participates in amino-acid biosynthesis; L-lysine biosynthesis via DAP pathway; (S)-tetrahydrodipicolinate from L-aspartate: step 4/4. Its function is as follows. Catalyzes the conversion of 4-hydroxy-tetrahydrodipicolinate (HTPA) to tetrahydrodipicolinate. In Herminiimonas arsenicoxydans, this protein is 4-hydroxy-tetrahydrodipicolinate reductase.